Here is a 1682-residue protein sequence, read N- to C-terminus: Collagen alpha-4(IV) chain (1682 aa).

Residues 1–32 (MRCFFRWTKSFVTAPWSLIFILFTIQYEYGSG) form the signal peptide. Positions 31–56 (SGKKYGGPCGGRNCSVCQCFPEKGSR) are 7S domain. N-linked (GlcNAc...) asparagine glycosylation is present at asparagine 43. 2 disordered regions span residues 56 to 255 (RGHP…VQPP) and 379 to 1453 (PGPP…FGPG). Residues 57–1451 (GHPGPLGPQG…TGDPGPKGFG (1395 aa)) form a triple-helical region region. Residues 86–88 (RGD) carry the Cell attachment site motif. Residues 103-116 (PTGVPGFPGVDGVP) are compositionally biased toward low complexity. Asparagine 134 is a glycosylation site (N-linked (GlcNAc...) asparagine). Short sequence motifs (cell attachment site) lie at residues 137-139 (RGD) and 181-183 (RGD). The span at 396-410 (MGPPGPPGVPGPPGF) shows a compositional bias: pro residues. The segment covering 411 to 426 (PGEAGVPGRLDCAPGK) has biased composition (low complexity). Residues 487 to 500 (PPGPMGPPGPPGPP) are compositionally biased toward pro residues. The segment covering 578-601 (DGGDGRPGERGDPGPRGDHKDAAP) has biased composition (basic and acidic residues). 2 short sequence motifs (cell attachment site) span residues 587–589 (RGD) and 593–595 (RGD). Residues 609–621 (LPGPPGRTGPEGP) are compositionally biased toward pro residues. A compositionally biased stretch (low complexity) spans 632-647 (QRGLPGEPGRPGTRGF). Asparagine 661 is a glycosylation site (N-linked (GlcNAc...) asparagine). Over residues 665-682 (PGKPGLPGLDGPPGLKGF) the composition is skewed to low complexity. A Cell attachment site motif is present at residues 716-718 (RGD). Composition is skewed to low complexity over residues 742 to 758 (PGKD…AFGD) and 857 to 902 (PAGM…LPGL). 2 stretches are compositionally biased toward basic and acidic residues: residues 911–929 (ERGK…EVGE) and 938–950 (DLGE…DRGL). Gly residues predominate over residues 969-978 (GPPGDGGFSG). 2 short sequence motifs (cell attachment site) span residues 980–982 (RGD) and 992–994 (RGD). Residues 998 to 1010 (DGLPGLHRGQPGI) show a composition bias toward low complexity. Positions 1011 to 1025 (DGPPGPPGPPGPPGS) are enriched in pro residues. Positions 1034-1044 (FPGFPGDQGDP) are enriched in low complexity. The short motif at 1144–1146 (RGD) is the Cell attachment site element. Composition is skewed to pro residues over residues 1223 to 1235 (PGPP…PGPA), 1248 to 1272 (DPGP…PPGS), 1289 to 1304 (PGPP…PGCQ), 1340 to 1351 (PGPPGRKGPVGP), and 1435 to 1444 (APGPPGPTGD). The Collagen IV NC1 domain occupies 1457–1682 (GFLLVLHSQT…SRCQVCMKHS (226 aa)). 6 disulfide bridges follow: cysteine 1472-cysteine 1561, cysteine 1505-cysteine 1558, cysteine 1517-cysteine 1523, cysteine 1580-cysteine 1678, cysteine 1614-cysteine 1675, and cysteine 1626-cysteine 1633.

This sequence belongs to the type IV collagen family. In terms of assembly, there are six type IV collagen isoforms, alpha 1(IV)-alpha 6(IV), each of which can form a triple helix structure with 2 other chains to generate type IV collagen network. The alpha 3(IV) chain forms a triple helical protomer with alpha 4(IV) and alpha 5(IV); this triple helical structure dimerizes through NC1-NC1 domain interactions such that the alpha 3(IV), alpha 4(IV) and alpha 5(IV) chains of one protomer connect with the alpha 5(IV), alpha 4(IV) and alpha 3(IV) chains of the opposite protomer, respectively. Associates with LAMB2 at the neuromuscular junction and in GBM. In terms of processing, prolines at the third position of the tripeptide repeating unit (G-X-Y) are hydroxylated in some or all of the chains. Type IV collagens contain numerous cysteine residues which are involved in inter- and intramolecular disulfide bonding. 12 of these, located in the NC1 domain, are conserved in all known type IV collagens. Post-translationally, the trimeric structure of the NC1 domains is stabilized by covalent bonds between Lys and Met residues. As to expression, expressed in Bruch's membrane, outer plexiform layer, inner nuclear layer, inner plexiform layer, ganglion cell layer, inner limiting membrane and around the blood vessels of the retina (at protein level). Highly expressed in kidney and lung. Detected at lower levels in heart, muscle and skin.

The protein resides in the secreted. Its subcellular location is the extracellular space. It localises to the extracellular matrix. It is found in the basement membrane. Its function is as follows. Type IV collagen is the major structural component of glomerular basement membranes (GBM), forming a 'chicken-wire' meshwork together with laminins, proteoglycans and entactin/nidogen. The sequence is that of Collagen alpha-4(IV) chain from Mus musculus (Mouse).